Reading from the N-terminus, the 205-residue chain is MSKRESSKYKIDRRMGENIWGRPKSPVNRREYGPGQHGQRRKGKLSDFGVQLRAKQKLKGYYGDLREKQFRAIFAEAARRKGDTSENLIGLLESRLDAIVYRAKFVPTVFAARQFVNHGHVTVNGVRVNIGSYRCKAGDVIEVREKSKQLVTVLEAVSLAERDVPDYIEVDHNKMVATFGRVPTLSDVPFPVVMEPHLVVEFYSR.

The segment covering 1–16 (MSKRESSKYKIDRRMG) has biased composition (basic and acidic residues). The interval 1-46 (MSKRESSKYKIDRRMGENIWGRPKSPVNRREYGPGQHGQRRKGKLS) is disordered. An S4 RNA-binding domain is found at 94 to 157 (SRLDAIVYRA…KQLVTVLEAV (64 aa)).

Belongs to the universal ribosomal protein uS4 family. Part of the 30S ribosomal subunit. Contacts protein S5. The interaction surface between S4 and S5 is involved in control of translational fidelity.

Its function is as follows. One of the primary rRNA binding proteins, it binds directly to 16S rRNA where it nucleates assembly of the body of the 30S subunit. With S5 and S12 plays an important role in translational accuracy. The chain is Small ribosomal subunit protein uS4 from Rhizobium etli (strain ATCC 51251 / DSM 11541 / JCM 21823 / NBRC 15573 / CFN 42).